Here is a 289-residue protein sequence, read N- to C-terminus: MPQEQYTHHRSTMPGSVGPQVYKVGIYGWRKRCLYFFVLLLMILILVNLAMTIWILKVMNFTIDGMGNLRITEKGLKLEGDSEFLQPLYAKEIQSRPGNALYFKSARNVTVNILNDQTKVLTQLITGPKAVEAYGKKFEVKTVSGKLLFSADNNEVVVGAERLRVLGAEGTVFPKSIETPNVRADPFKELRLESPTRSLVMEAPKGVEINAEAGNMEATCRTELRLESKDGEIKLDAAKIRLPRLPHGSYTPTGTRQKVFEICVCANGRLFLSQAGAGSTCQINTSVCL.

At 1-35 (MPQEQYTHHRSTMPGSVGPQVYKVGIYGWRKRCLY) the chain is on the cytoplasmic side. Residues 36–56 (FFVLLLMILILVNLAMTIWIL) traverse the membrane as a helical; Signal-anchor for type II membrane protein segment. Residues 57-289 (KVMNFTIDGM…TCQINTSVCL (233 aa)) lie on the Extracellular side of the membrane. N-linked (GlcNAc...) asparagine glycans are attached at residues asparagine 60 and asparagine 108. Intrachain disulfides connect cysteine 263–cysteine 288 and cysteine 265–cysteine 281. Asparagine 284 carries N-linked (GlcNAc...) asparagine glycosylation.

Belongs to the sarcoglycan beta/delta/gamma/zeta family. In terms of assembly, interacts with FLNC and DAG1. Cross-link to form 2 major subcomplexes: one consisting of SGCB, SGCD and SGCG and the other consisting of SGCB and SGCD. The association between SGCB and SGCG is particularly strong while SGCA is loosely associated with the other sarcoglycans. In terms of processing, glycosylated. Disulfide bonds are present. In terms of tissue distribution, most strongly expressed in skeletal and cardiac muscle. Also detected in smooth muscle. Weak expression in brain and lung.

The protein localises to the cell membrane. It localises to the sarcolemma. The protein resides in the cytoplasm. Its subcellular location is the cytoskeleton. In terms of biological role, component of the sarcoglycan complex, a subcomplex of the dystrophin-glycoprotein complex which forms a link between the F-actin cytoskeleton and the extracellular matrix. The polypeptide is Delta-sarcoglycan (SGCD) (Homo sapiens (Human)).